The sequence spans 243 residues: Terpene cyclase penB (243 aa).

Helical transmembrane passes span 19–39 (IANI…VGMI), 48–68 (YGMA…YSLI), and 78–98 (GVFI…IKFA). Asn-111 carries N-linked (GlcNAc...) asparagine glycosylation. The next 4 membrane-spanning stretches (helical) occupy residues 112-132 (LSLI…ALAA), 137-157 (SLAY…GGLC), 172-194 (LWLS…WMYW), and 205-225 (LVLW…LCYW).

This sequence belongs to the paxB family.

It localises to the membrane. It participates in secondary metabolite biosynthesis. In terms of biological role, terpene cyclase; part of the gene cluster that mediates the biosynthesis of the indole diterpenes penitrems. The geranylgeranyl diphosphate (GGPP) synthase penG catalyzes the first step in penitrem biosynthesis via conversion of farnesyl pyrophosphate and isopentyl pyrophosphate into geranylgeranyl pyrophosphate (GGPP). Condensation of indole-3-glycerol phosphate with GGPP by the prenyl transferase penC then forms 3-geranylgeranylindole (3-GGI). Epoxidation by the FAD-dependent monooxygenase penM leads to a epoxidized-GGI that is substrate of the terpene cyclase penB for cyclization to yield paspaline. Paspaline is subsequently converted to 13-desoxypaxilline by the cytochrome P450 monooxygenase penP, the latter being then converted to paxilline by the cytochrome P450 monooxygenase penQ. Paxilline is converted to beta-paxitriol via C-10 ketoreduction by the short-chain dehydrogenase PC-15 which can be monoprenylated at the C-20 by the indole diterpene prenyltransferase penD. A two-step elimination (acetylation and elimination) process performed by the O-acetyltransferase PC-16 and the P.simplicissimum ptmI-ortholog not yet identified in P.crustosum, leads to the production of the prenylated form of penijanthine. The FAD-linked oxidoreductase ptmO then converts the prenylated form of penijanthine into PC-M5 which is in turn transformed into PC-M4 by the aromatic dimethylallyltransferase PC-22. A series of oxidation steps involving 4 cytochrome P450 monooxygenases (PC-21, PC-05, PC-23, PC-20) and a FAD-dependent monooxygenase (PC-14) are required for the transformation of PC-M4 to penitrems A and E. Synthesis of these final products is proposed to proceed via penitrems D and C (PC-21, PC-05, PC-14) and penitrems B and F (PC-21, PC-05, PC-14, PC-23). The protein is Terpene cyclase penB (penB) of Penicillium crustosum (Blue mold fungus).